The chain runs to 57 residues: UPF0391 membrane protein Xaut_1725 (57 aa).

The next 2 helical transmembrane spans lie at 4–24 (WAVTFLVVALIAAVLGFGGIA) and 30–50 (IAKIIFFVAIVLFVISAVAGL).

This sequence belongs to the UPF0391 family.

The protein resides in the cell membrane. The chain is UPF0391 membrane protein Xaut_1725 from Xanthobacter autotrophicus (strain ATCC BAA-1158 / Py2).